Consider the following 481-residue polypeptide: Probable glycine dehydrogenase (decarboxylating) subunit 2 (481 aa).

At Lys269 the chain carries N6-(pyridoxal phosphate)lysine.

Belongs to the GcvP family. C-terminal subunit subfamily. In terms of assembly, the glycine cleavage system is composed of four proteins: P, T, L and H. In this organism, the P 'protein' is a heterodimer of two subunits. Pyridoxal 5'-phosphate serves as cofactor.

The catalysed reaction is N(6)-[(R)-lipoyl]-L-lysyl-[glycine-cleavage complex H protein] + glycine + H(+) = N(6)-[(R)-S(8)-aminomethyldihydrolipoyl]-L-lysyl-[glycine-cleavage complex H protein] + CO2. The glycine cleavage system catalyzes the degradation of glycine. The P protein binds the alpha-amino group of glycine through its pyridoxal phosphate cofactor; CO(2) is released and the remaining methylamine moiety is then transferred to the lipoamide cofactor of the H protein. The chain is Probable glycine dehydrogenase (decarboxylating) subunit 2 from Chlorobium chlorochromatii (strain CaD3).